We begin with the raw amino-acid sequence, 568 residues long: MTVSTFNRTWAKVIVNALLRYGVKHFCIAPGSRSTPLTLEALQLQQNQQAQCHSHFDERGLGFFALGIAKVTNDPVAIIVTSGTAVANLYPAVIEASLTHHKLIVLSADRPPELIGCGANQAIPQQGIFADYPIAGVNLPKPAEHYNAGWLVATIEQACVTQSQQGGVIHINAPFAEPLYEADENAIGTHPWLKPIQSWLINPQTKWINSQTIQSEVSMHENWDYWRTKRGVIVVGKLPVEQGIGIKAWAETLGWCLITDVQSCVDANLPYADIWLSNNTVHQRLLQADIVIQFGGQIVSKRVNKFLEAFKGEFWQVDEYSDYLNPFAHHQTRFVAKAHHFLRVHPPLRQKPWLLEPLALSQFCAGFIEQQVGGSLNEASLAHHIEEVLATSGNLFIGNSLFVRLVDALCKLPEGYPVYTNRGASGIDGLIATMAGVAKGSGQPTVGVIGDISALHDLNSVSLLNKISHPCILFVINNSGGAIFDMLPVEAQAKEQFYRLSHNYEFAPIATMFGIEYIRPFTWADLKAKLKLAYGRKGVTIVEIKVNDQDGSNLYKSLVKQISQAEIA.

Belongs to the TPP enzyme family. MenD subfamily. Homodimer. Requires Mg(2+) as cofactor. It depends on Mn(2+) as a cofactor. Thiamine diphosphate is required as a cofactor.

It carries out the reaction isochorismate + 2-oxoglutarate + H(+) = 5-enolpyruvoyl-6-hydroxy-2-succinyl-cyclohex-3-ene-1-carboxylate + CO2. Its pathway is quinol/quinone metabolism; 1,4-dihydroxy-2-naphthoate biosynthesis; 1,4-dihydroxy-2-naphthoate from chorismate: step 2/7. It functions in the pathway quinol/quinone metabolism; menaquinone biosynthesis. Functionally, catalyzes the thiamine diphosphate-dependent decarboxylation of 2-oxoglutarate and the subsequent addition of the resulting succinic semialdehyde-thiamine pyrophosphate anion to isochorismate to yield 2-succinyl-5-enolpyruvyl-6-hydroxy-3-cyclohexene-1-carboxylate (SEPHCHC). The polypeptide is 2-succinyl-5-enolpyruvyl-6-hydroxy-3-cyclohexene-1-carboxylate synthase (Actinobacillus pleuropneumoniae serotype 7 (strain AP76)).